The primary structure comprises 409 residues: Transcription termination factor 3, mitochondrial (409 aa).

The transit peptide at Met1–Ser64 directs the protein to the mitochondrion. The segment at Arg74–Ile93 is disordered.

Belongs to the mTERF family.

It is found in the mitochondrion. In terms of biological role, binds promoter DNA and regulates initiation of transcription. Required for normal mitochondrial transcription and translation, and for normal assembly of mitochondrial respiratory complexes. Required for normal mitochondrial function. Maintains 16S rRNA levels and functions in mitochondrial ribosome assembly by regulating the biogenesis of the 39S ribosomal subunit. The polypeptide is Transcription termination factor 3, mitochondrial (Mterf3) (Rattus norvegicus (Rat)).